Reading from the N-terminus, the 359-residue chain is MKAATAVIDRHALRHNLQQIRRLAPQSRLVAVVKANAYGHGLLAAAHTLQDADCYGVARISEALMLRAGGIVKPILLLEGFFDAEDLPVLVANHIETAVHSLEQLVALEAATLSAPINVWMKLDTGMHRLGVRPDQAEAFYQRLSACRNVIQPVNIMSHFSRADEPEVAATQQQLACFDAFAAGKPGKQSIAASGGILRWPQAHRDWVRPGIVLYGVSPFDAPYGRDFGLLPAMTLKSSLIAVREHKAGESVGYGGTWVSERDTRLGVIAIGYGDGYPRSAPSGTPVWLNGREVSIVGRVSMDMISIDLGPESTDKVGDEALMWGAELPVERVAACTGISAYELITNLTSRVAMEYLGE.

The active-site Proton acceptor; specific for D-alanine is Lys34. Residue Lys34 is modified to N6-(pyridoxal phosphate)lysine. Arg129 contacts substrate. Tyr254 acts as the Proton acceptor; specific for L-alanine in catalysis. Met302 is a substrate binding site.

This sequence belongs to the alanine racemase family. Pyridoxal 5'-phosphate serves as cofactor.

The catalysed reaction is L-alanine = D-alanine. The protein operates within amino-acid biosynthesis; D-alanine biosynthesis; D-alanine from L-alanine: step 1/1. In terms of biological role, catalyzes the interconversion of L-alanine and D-alanine. May also act on other amino acids. The protein is Alanine racemase (alr) of Yersinia pestis.